Consider the following 495-residue polypeptide: MKLDKNKIQISIGKNPSKTFYKLQLLLKDHFPENLKTKFSFQTASGIFTGENGQIFTDEVEKIIYLGLGETSKIKIRGVAQHFFQFGEKLKKWEGVGLEIHLPKVLTNSLSADLVVYQIVNSLEQGVYAINVLAKEYKENSKKIGNVSFILQDAAKLKEAEKGLKRGKIVSRYINGVRHIAHLPANHFTPEEFVSRSKEIAKDNGLKITVFDEPQLKKEKMGGILSVCEGSDKKAKMILLEYTPVKPITKKKLAIIGKGLTFDSGGISIKPAQDMHEMKYDMCGAATAIHAIGAIAELGLGVPVIAAIGVAENMPDAAAIKPGDVYTAYNGITVEVQNTDAEGRLVLGDVLSYVGKKFKPDYMLDLATLTGAIIISLGHEAAGVMSNSDVLTNLLKEASISSDERIWEMPLWEEYSEDLKSDIADIRNVAGRAGGSLSAAKFLERFVEPGIAWAHIDIAGTAWRKKTSGTQIGNGPTGYGVRLLVDLVEKIGKKK.

Mn(2+)-binding residues include lysine 258 and aspartate 263. The active site involves lysine 270. Residues aspartate 281, aspartate 340, and glutamate 342 each contribute to the Mn(2+) site. Residue arginine 344 is part of the active site.

The protein belongs to the peptidase M17 family. It depends on Mn(2+) as a cofactor.

It localises to the cytoplasm. The enzyme catalyses Release of an N-terminal amino acid, Xaa-|-Yaa-, in which Xaa is preferably Leu, but may be other amino acids including Pro although not Arg or Lys, and Yaa may be Pro. Amino acid amides and methyl esters are also readily hydrolyzed, but rates on arylamides are exceedingly low.. It carries out the reaction Release of an N-terminal amino acid, preferentially leucine, but not glutamic or aspartic acids.. Its function is as follows. Presumably involved in the processing and regular turnover of intracellular proteins. Catalyzes the removal of unsubstituted N-terminal amino acids from various peptides. This chain is Probable cytosol aminopeptidase, found in Leptospira interrogans serogroup Icterohaemorrhagiae serovar Lai (strain 56601).